Here is a 150-residue protein sequence, read N- to C-terminus: Flagellar assembly factor FliW (150 aa).

It belongs to the FliW family. As to quaternary structure, interacts with translational regulator CsrA and flagellin(s).

The protein resides in the cytoplasm. Its function is as follows. Acts as an anti-CsrA protein, binds CsrA and prevents it from repressing translation of its target genes, one of which is flagellin. Binds to flagellin and participates in the assembly of the flagellum. This is Flagellar assembly factor FliW from Caldanaerobacter subterraneus subsp. tengcongensis (strain DSM 15242 / JCM 11007 / NBRC 100824 / MB4) (Thermoanaerobacter tengcongensis).